We begin with the raw amino-acid sequence, 315 residues long: Porphobilinogen deaminase (315 aa).

At C241 the chain carries S-(dipyrrolylmethanemethyl)cysteine.

Belongs to the HMBS family. Monomer. The cofactor is dipyrromethane.

It catalyses the reaction 4 porphobilinogen + H2O = hydroxymethylbilane + 4 NH4(+). It participates in porphyrin-containing compound metabolism; protoporphyrin-IX biosynthesis; coproporphyrinogen-III from 5-aminolevulinate: step 2/4. Its function is as follows. Tetrapolymerization of the monopyrrole PBG into the hydroxymethylbilane pre-uroporphyrinogen in several discrete steps. This is Porphobilinogen deaminase from Nitratidesulfovibrio vulgaris (strain DP4) (Desulfovibrio vulgaris).